The chain runs to 246 residues: Probable transcriptional regulatory protein APJL_1171 (246 aa).

Belongs to the TACO1 family.

Its subcellular location is the cytoplasm. The polypeptide is Probable transcriptional regulatory protein APJL_1171 (Actinobacillus pleuropneumoniae serotype 3 (strain JL03)).